A 117-amino-acid chain; its full sequence is Hydrogenase maturation factor HypA (117 aa).

Position 2 (H2) interacts with Ni(2+). 4 residues coordinate Zn(2+): C73, C76, C89, and C92.

This sequence belongs to the HypA/HybF family.

In terms of biological role, involved in the maturation of [NiFe] hydrogenases. Required for nickel insertion into the metal center of the hydrogenase. The polypeptide is Hydrogenase maturation factor HypA (Shewanella baltica (strain OS185)).